The primary structure comprises 265 residues: Serine protease harobin (265 aa).

The first 18 residues, 1–18 (MPLIRVLASLLILQLSYG), serve as a signal peptide directing secretion. The propeptide occupies 19-33 (KSLDNGAKAITSLDR). Residues 34–257 (IIGGFECNPS…YKDWIEGIIA (224 aa)) form the Peptidase S1 domain. Cystine bridges form between cysteine 40–cysteine 172, cysteine 59–cysteine 75, cysteine 106–cysteine 152, cysteine 107–cysteine 264, cysteine 151–cysteine 218, cysteine 183–cysteine 197, and cysteine 208–cysteine 233. Catalysis depends on histidine 74, which acts as the Charge relay system. An N-linked (GlcNAc...) asparagine glycan is attached at asparagine 112. Aspartate 119 (charge relay system) is an active-site residue. N-linked (GlcNAc...) asparagine glycosylation is present at asparagine 130. Serine 212 acts as the Charge relay system in catalysis.

This sequence belongs to the peptidase S1 family. Snake venom subfamily. In terms of assembly, monomer. Post-translationally, harobin contains three additional Cys residues than other snake venom serine proteases, suggesting an additional disulfide bond. In addition, it is more stable than other snake 6-disulfide-bond serine proteases, since it is less sensitive to DTT. In terms of tissue distribution, expressed by the venom gland.

It localises to the secreted. Its activity is regulated as follows. Inhibited by PMSF. In terms of biological role, serine protein with fibrinolytic and fibrinogenolytic activities. Degrades Bbeta-chain (FGB) of fibrinogen first and then the Aalpha-chain (FGA). Gamma-chain (FGG) are also digested on prolonged incubation. In vitro, it cleaves high molecular weight (HMW) kininogen (KNG) releasing bradykinin that promotes vasodilation. In vitro and in vivo, it cleaves angiotensin-2 (AGT). This explains the reduction of blood pressure in hypertensive rats. Also has antithrombotic effects on thrombosis animal models. The sequence is that of Serine protease harobin from Hydrophis hardwickii (Hardwick's spine-bellied seasnake).